The sequence spans 628 residues: Hemocyanin II (628 aa).

At Thr-1 the chain carries Blocked amino end (Thr); partial. The Cu cation site is built by His-173, His-177, His-204, His-324, His-328, and His-364. N-linked (GlcNAc...) asparagine glycosylation occurs at Asn-449. Disulfide bonds link Cys-534–Cys-576 and Cys-536–Cys-583.

It belongs to the tyrosinase family. Hemocyanin subfamily. In terms of assembly, hexamer or a multiple thereof. As to expression, hemolymph.

Its subcellular location is the secreted. The protein resides in the extracellular space. In terms of biological role, hemocyanins are copper-containing oxygen carriers occurring freely dissolved in the hemolymph of many mollusks and arthropods. The polypeptide is Hemocyanin II (Limulus polyphemus (Atlantic horseshoe crab)).